The sequence spans 270 residues: Interleukin-33 (270 aa).

The homeodomain-like HTH domain stretch occupies residues 1–65 (MKPKMKYSTN…EACYFRRETT (65 aa)). Positions 1–94 (MKPKMKYSTN…CQQQSTVESF (94 aa)) are excised as a propeptide. The segment at 64 to 111 (TTKRPSLKTDRKHKRHLVLAACQQQSTVESFAFGISGVQKYTRALHDS) is interaction with RELA.

This sequence belongs to the IL-1 family. Highly divergent. In terms of assembly, forms a 1:1:1 heterotrimeric complex with its primary high-affinity receptor IL1RL1 and the coreceptor IL1RAP. Interacts with cargo receptor TMED10; the interaction mediates the translocation from the cytoplasm into the ERGIC (endoplasmic reticulum-Golgi intermediate compartment) and thereby secretion. The full-length protein can be released from cells and is able to signal via the IL1RL1/ST2 receptor. However, proteolytic processing by CELA1, CSTG/cathepsin G and ELANE/neutrophil elastase produces C-terminal peptides that are more active than the unprocessed full-length protein. May also be proteolytically processed by calpains. Proteolytic cleavage mediated by apoptotic caspases including CASP3 and CASP7 results in IL33 inactivation. In vitro proteolytic cleavage by CASP1 was reported but could not be confirmed in vivo suggesting that IL33 is probably not a direct substrate for that caspase.

The protein localises to the nucleus. Its subcellular location is the chromosome. It is found in the cytoplasm. The protein resides in the cytoplasmic vesicle. It localises to the secretory vesicle. The protein localises to the secreted. In terms of biological role, cytokine that binds to and signals through the IL1RL1/ST2 receptor which in turn activates NF-kappa-B and MAPK signaling pathways in target cells. Involved in the maturation of Th2 cells inducing the secretion of T-helper type 2-associated cytokines. Also involved in activation of mast cells, basophils, eosinophils and natural killer cells. Acts as a chemoattractant for Th2 cells, and may function as an 'alarmin', that amplifies immune responses during tissue injury. Induces rapid UCP2-dependent mitochondrial rewiring that attenuates the generation of reactive oxygen species and preserves the integrity of Krebs cycle required for persistent production of itaconate and subsequent GATA3-dependent differentiation of inflammation-resolving alternatively activated macrophages. In quiescent endothelia the uncleaved form is constitutively and abundantly expressed, and acts as a chromatin-associated nuclear factor with transcriptional repressor properties, it may sequester nuclear NF-kappaB/RELA, lowering expression of its targets. This form is rapidely lost upon angiogenic or pro-inflammatory activation. This chain is Interleukin-33 (IL33), found in Pongo abelii (Sumatran orangutan).